A 164-amino-acid chain; its full sequence is Thiol peroxidase (164 aa).

The Thioredoxin domain occupies 18-163 (INEGDFAPDF…FDAALAAYKN (146 aa)). Cysteine 60 acts as the Cysteine sulfenic acid (-SOH) intermediate in catalysis. Cysteine 60 and cysteine 93 form a disulfide bridge.

Belongs to the peroxiredoxin family. Tpx subfamily. As to quaternary structure, homodimer.

It carries out the reaction a hydroperoxide + [thioredoxin]-dithiol = an alcohol + [thioredoxin]-disulfide + H2O. In terms of biological role, thiol-specific peroxidase that catalyzes the reduction of hydrogen peroxide and organic hydroperoxides to water and alcohols, respectively. Plays a role in cell protection against oxidative stress by detoxifying peroxides. This is Thiol peroxidase from Staphylococcus aureus (strain MRSA252).